Here is a 714-residue protein sequence, read N- to C-terminus: Fumarate reductase flavoprotein subunit (714 aa).

FAD contacts are provided by residues 13–16 (GGLA), 42–44 (SHS), and 49–50 (GG). A Tele-8alpha-FAD histidine modification is found at His43. Residues His257 and Arg273 contribute to the active site. FAD is bound by residues Glu420 and 436 to 437 (SV).

The protein belongs to the FAD-dependent oxidoreductase 2 family. FRD/SDH subfamily. Part of an enzyme complex containing three subunits: a flavoprotein (frdA), an iron-sulfur protein (frdB), and diheme cytochrome b (frdC). The cofactor is FAD.

The protein localises to the cell inner membrane. It catalyses the reaction a quinone + succinate = fumarate + a quinol. Functionally, the fumarate reductase enzyme complex is required for fumarate respiration. The sequence is that of Fumarate reductase flavoprotein subunit (frdA) from Helicobacter pylori (strain J99 / ATCC 700824) (Campylobacter pylori J99).